The sequence spans 410 residues: Trifunctional NAD biosynthesis/regulator protein NadR (410 aa).

The HTH cro/C1-type domain maps to 7–62 (LKTAIKQQGCTLQQVADASGMTKGYLSQLLNAKIKSPSAQKLEALHRFLGLEFPRQ). The segment at residues 18–37 (LQQVADASGMTKGYLSQLLN) is a DNA-binding region (H-T-H motif). The interval 63 to 229 (KKTIGVVFGK…EYIPTEVKPF (167 aa)) is nicotinamide mononucleotide adenylyltransferase. Residues 70–73 (FGKF), His77, Arg104, 144–157 (EEGMEPYPHGWDVW), 177–179 (TSE), 204–206 (MSI), 259–261 (SAW), and 294–297 (YIDF) each bind NAD(+). The ribosylnicotinamide kinase stretch occupies residues 230 to 410 (FVRTVAILGG…LVREMMGEQR (181 aa)).

This sequence in the central section; belongs to the bacterial NMN adenylyltransferase family. In the C-terminal section; belongs to the bacterial RNK family. As to quaternary structure, homotetramer.

The protein localises to the cell membrane. It is found in the cytoplasm. The catalysed reaction is beta-nicotinamide D-ribonucleotide + ATP + H(+) = diphosphate + NAD(+). The enzyme catalyses beta-nicotinamide D-riboside + ATP = beta-nicotinamide D-ribonucleotide + ADP + H(+). The protein operates within cofactor biosynthesis; NAD(+) biosynthesis [regulation]. Its pathway is cofactor biosynthesis; NAD(+) biosynthesis; NAD(+) from nicotinamide D-ribonucleotide: step 1/1. With respect to regulation, feed-back regulated by NAD. A high level of NAD causes NadR to lose enzymatic activity and repress several NAD synthetic genes; conversely, a low NAD level activates the assimilatory enzymatic activities and leads to derepression of biosynthetic genes. In terms of biological role, this enzyme has three activities: DNA binding, nicotinamide mononucleotide (NMN) adenylyltransferase and ribosylnicotinamide (RN) kinase. The DNA-binding domain binds to the nadB operator sequence in an NAD- and ATP-dependent manner. As NAD levels increase within the cell, the affinity of NadR for the nadB operator regions of nadA, nadB, and pncB increases, repressing the transcription of these genes. The RN kinase activity catalyzes the phosphorylation of RN to form nicotinamide ribonucleotide. The NMN adenylyltransferase activity catalyzes the transfer of the AMP moiety of ATP to nicotinamide ribonucleotide to form NAD(+). The NMN adenylyltransferase domain also functions as the NAD and ATP sensor. This Escherichia coli (strain K12) protein is Trifunctional NAD biosynthesis/regulator protein NadR (nadR).